Here is a 518-residue protein sequence, read N- to C-terminus: Sensor protein kinase HptS (518 aa).

Helical transmembrane passes span 20-40 (IFPV…IYIW) and 222-242 (GITL…FGFI). The Histidine kinase domain maps to 297–513 (EQLIHSIEHT…LICYKIPLSR (217 aa)). Position 325 is a phosphohistidine; by autocatalysis (His-325).

In terms of processing, autophosphorylated.

Its subcellular location is the cell membrane. It catalyses the reaction ATP + protein L-histidine = ADP + protein N-phospho-L-histidine.. Functionally, member of the two-component regulatory system HptS/HptR that regulates genes involved in hexose phosphate transport system in response to changes in extracellular phosphate sources. May act as a sensor protein kinase which is autophosphorylated at a histidine residue and transfers its phosphate group to the conserved aspartic acid residue in the regulatory domain of HptS. In turn, HptS antagonizes CcpA-dependent transcription of a subset of CcpA-regulated genes involved in antibiotic susceptibility. This Staphylococcus aureus (strain USA300) protein is Sensor protein kinase HptS (hptS).